Consider the following 71-residue polypeptide: Translation initiation factor IF-1 (71 aa).

In terms of domain architecture, S1-like spans 1 to 71; sequence MAKQAAIEQD…LTKARITYRY (71 aa).

The protein belongs to the IF-1 family. Component of the 30S ribosomal translation pre-initiation complex which assembles on the 30S ribosome in the order IF-2 and IF-3, IF-1 and N-formylmethionyl-tRNA(fMet); mRNA recruitment can occur at any time during PIC assembly.

It is found in the cytoplasm. One of the essential components for the initiation of protein synthesis. Stabilizes the binding of IF-2 and IF-3 on the 30S subunit to which N-formylmethionyl-tRNA(fMet) subsequently binds. Helps modulate mRNA selection, yielding the 30S pre-initiation complex (PIC). Upon addition of the 50S ribosomal subunit IF-1, IF-2 and IF-3 are released leaving the mature 70S translation initiation complex. The chain is Translation initiation factor IF-1 from Christiangramia forsetii (strain DSM 17595 / CGMCC 1.15422 / KT0803) (Gramella forsetii).